Consider the following 338-residue polypeptide: UPF0324 membrane protein HI_1643 (338 aa).

10 helical membrane passes run 5–23 (PFYFGLIFIAIIAVLANYL), 33–55 (HISALIIAILLGMAIGNTIYPQF), 62–84 (GVLFAKGTLLRAGIVLYGFRLTF), 94–116 (AVVTDAIMLISTFFLTALLGIRY), 123–145 (LVYLTGAGCSICGAAAVMAAEPV), 155–177 (VAIAVVVIFGTLSIFTYPFFYTW), 222–239 (LRVMMLAPFLFMLSWLLT), 254–273 (IPWFAVLFIGVAIFNSFDLL), 280–302 (LFVEIDSFLLISAMAALGLTTQA), and 312–334 (PLVLGVLIYLWLVIGGFLVNYGI).

It belongs to the UPF0324 family.

Its subcellular location is the cell membrane. The sequence is that of UPF0324 membrane protein HI_1643 from Haemophilus influenzae (strain ATCC 51907 / DSM 11121 / KW20 / Rd).